Consider the following 317-residue polypeptide: Aspartate carbamoyltransferase catalytic subunit (317 aa).

Carbamoyl phosphate-binding residues include R66 and T67. K94 contributes to the L-aspartate binding site. Residues R116, H144, and Q147 each contribute to the carbamoyl phosphate site. L-aspartate contacts are provided by R177 and R231. The carbamoyl phosphate site is built by G272 and P273.

This sequence belongs to the aspartate/ornithine carbamoyltransferase superfamily. ATCase family. As to quaternary structure, heterododecamer (2C3:3R2) of six catalytic PyrB chains organized as two trimers (C3), and six regulatory PyrI chains organized as three dimers (R2).

The enzyme catalyses carbamoyl phosphate + L-aspartate = N-carbamoyl-L-aspartate + phosphate + H(+). The protein operates within pyrimidine metabolism; UMP biosynthesis via de novo pathway; (S)-dihydroorotate from bicarbonate: step 2/3. In terms of biological role, catalyzes the condensation of carbamoyl phosphate and aspartate to form carbamoyl aspartate and inorganic phosphate, the committed step in the de novo pyrimidine nucleotide biosynthesis pathway. The chain is Aspartate carbamoyltransferase catalytic subunit from Rhodopseudomonas palustris (strain ATCC BAA-98 / CGA009).